A 205-amino-acid chain; its full sequence is uncharacterized protein (205 aa).

Residues 26–129 form the HD domain; that stretch reads DWHHVSRVAD…VQDADRLDAI (104 aa).

This is an uncharacterized protein from Bacillus subtilis (strain 168).